The primary structure comprises 93 residues: Small ribosomal subunit protein uS19 (93 aa).

It belongs to the universal ribosomal protein uS19 family.

In terms of biological role, protein S19 forms a complex with S13 that binds strongly to the 16S ribosomal RNA. This is Small ribosomal subunit protein uS19 from Maridesulfovibrio salexigens (strain ATCC 14822 / DSM 2638 / NCIMB 8403 / VKM B-1763) (Desulfovibrio salexigens).